A 351-amino-acid polypeptide reads, in one-letter code: DNA polymerase IV (351 aa).

Residues 4 to 185 (IIHIDMDCFY…LPLRKIPGVG (182 aa)) form the UmuC domain. Residues Asp8 and Asp103 each contribute to the Mg(2+) site. Glu104 is an active-site residue.

The protein belongs to the DNA polymerase type-Y family. As to quaternary structure, monomer. Mg(2+) is required as a cofactor.

It is found in the cytoplasm. It carries out the reaction DNA(n) + a 2'-deoxyribonucleoside 5'-triphosphate = DNA(n+1) + diphosphate. In terms of biological role, poorly processive, error-prone DNA polymerase involved in untargeted mutagenesis. Copies undamaged DNA at stalled replication forks, which arise in vivo from mismatched or misaligned primer ends. These misaligned primers can be extended by PolIV. Exhibits no 3'-5' exonuclease (proofreading) activity. May be involved in translesional synthesis, in conjunction with the beta clamp from PolIII. The polypeptide is DNA polymerase IV (Photorhabdus laumondii subsp. laumondii (strain DSM 15139 / CIP 105565 / TT01) (Photorhabdus luminescens subsp. laumondii)).